We begin with the raw amino-acid sequence, 260 residues long: Pyridoxine 5'-phosphate synthase (260 aa).

Residues N10 and R21 each contribute to the 3-amino-2-oxopropyl phosphate site. The active-site Proton acceptor is H46. 1-deoxy-D-xylulose 5-phosphate contacts are provided by R48 and H53. E76 acts as the Proton acceptor in catalysis. Position 113 (T113) interacts with 1-deoxy-D-xylulose 5-phosphate. Residue H204 is the Proton donor of the active site. Residues D205 and 227–228 (GH) contribute to the 3-amino-2-oxopropyl phosphate site.

The protein belongs to the PNP synthase family. Homooctamer; tetramer of dimers.

It localises to the cytoplasm. It catalyses the reaction 3-amino-2-oxopropyl phosphate + 1-deoxy-D-xylulose 5-phosphate = pyridoxine 5'-phosphate + phosphate + 2 H2O + H(+). It participates in cofactor biosynthesis; pyridoxine 5'-phosphate biosynthesis; pyridoxine 5'-phosphate from D-erythrose 4-phosphate: step 5/5. Functionally, catalyzes the complicated ring closure reaction between the two acyclic compounds 1-deoxy-D-xylulose-5-phosphate (DXP) and 3-amino-2-oxopropyl phosphate (1-amino-acetone-3-phosphate or AAP) to form pyridoxine 5'-phosphate (PNP) and inorganic phosphate. The polypeptide is Pyridoxine 5'-phosphate synthase (Xylella fastidiosa (strain 9a5c)).